Here is a 337-residue protein sequence, read N- to C-terminus: Glyceraldehyde-3-phosphate dehydrogenase (337 aa).

NAD(+) contacts are provided by residues 12–13, aspartate 34, and arginine 79; that span reads RI. Residues 150–152, threonine 181, 210–211, and arginine 233 each bind D-glyceraldehyde 3-phosphate; these read SCT and TG. Cysteine 151 acts as the Nucleophile in catalysis. Asparagine 315 serves as a coordination point for NAD(+).

It belongs to the glyceraldehyde-3-phosphate dehydrogenase family. In terms of assembly, homotetramer.

The protein localises to the cytoplasm. It catalyses the reaction D-glyceraldehyde 3-phosphate + phosphate + NAD(+) = (2R)-3-phospho-glyceroyl phosphate + NADH + H(+). The protein operates within carbohydrate degradation; glycolysis; pyruvate from D-glyceraldehyde 3-phosphate: step 1/5. The chain is Glyceraldehyde-3-phosphate dehydrogenase from Cryphonectria parasitica (Chestnut blight fungus).